The chain runs to 498 residues: ATP synthase subunit beta, chloroplastic (498 aa).

Residue 172–179 (GGAGVGKT) coordinates ATP.

Belongs to the ATPase alpha/beta chains family. In terms of assembly, F-type ATPases have 2 components, CF(1) - the catalytic core - and CF(0) - the membrane proton channel. CF(1) has five subunits: alpha(3), beta(3), gamma(1), delta(1), epsilon(1). CF(0) has four main subunits: a(1), b(1), b'(1) and c(9-12).

The protein resides in the plastid. It localises to the chloroplast thylakoid membrane. The catalysed reaction is ATP + H2O + 4 H(+)(in) = ADP + phosphate + 5 H(+)(out). Functionally, produces ATP from ADP in the presence of a proton gradient across the membrane. The catalytic sites are hosted primarily by the beta subunits. The polypeptide is ATP synthase subunit beta, chloroplastic (Trochodendron aralioides (Wheel tree)).